The sequence spans 2168 residues: Genome polyprotein (2168 aa).

The interval 1–20 (MGMQMSKNTAGSHTTVTQAS) is disordered. Gly-2 carries the N-myristoyl glycine; by host lipid modification. Topologically, residues 2 to 1479 (GMQMSKNTAG…NVSIATTILS (1478 aa)) are cytoplasmic. Amphipathic alpha-helix stretches follow at residues 551–567 (ALQAPVETALNSAISSV) and 554–575 (APVETALNSAISSVIAGITAQD). A compositionally biased stretch (polar residues) spans 576 to 589 (TQPSSHNISTSETP). Residues 576 to 607 (TQPSSHNISTSETPALQAAETGASSNASDEGM) are disordered. Residues His-856 and Asp-874 each act as for protease 2A activity in the active site. Zn(2+) is bound by residues Cys-891 and Cys-893. The active-site For protease 2A activity is the Cys-945. Residues Cys-951 and His-953 each coordinate Zn(2+). Positions 1085–1157 (GDDWLKKFTS…EHSCPTTEQQ (73 aa)) are membrane-binding. The tract at residues 1085-1223 (GDDWLKKFTS…TAGTGKSLAT (139 aa)) is oligomerization. Residues 1106–1110 (AEKIM) are RNA-binding. One can recognise an SF3 helicase domain in the interval 1189 to 1347 (EKRILGYIQF…YKTHNGTLDV (159 aa)). Cys-1354, Cys-1365, and Cys-1370 together coordinate Zn(2+). The C4-type; degenerate zinc finger occupies 1354–1370 (CEDCCPANFKTCMPLIC). Positions 1397 to 1404 (EWKRRNQV) are RNA-binding. Residues 1408-1413 (YVRLFQ) form an oligomerization region. An intramembrane segment occupies 1480–1495 (SLVLLTSVITLVYLVY). At 1496–2168 (RLFAGYQGPY…SLLREWYEKF (673 aa)) the chain is on the cytoplasmic side. Residue Tyr-1505 is modified to O-(5'-phospho-RNA)-tyrosine. In terms of domain architecture, Peptidase C3 spans 1525-1703 (GPLMDFGVGM…FCAALKRSYF (179 aa)). Catalysis depends on for protease 3C activity residues His-1564, Glu-1595, and Cys-1671. The 115-residue stretch at 1934 to 2048 (GELFGFDYTA…ASYPYRIDPA (115 aa)) folds into the RdRp catalytic domain. The Mg(2+) site is built by Asp-1940 and Asp-2035.

It belongs to the picornaviruses polyprotein family. In terms of assembly, interacts with capsid protein VP1 and capsid protein VP3 to form heterotrimeric protomers. As to quaternary structure, interacts with capsid protein VP0, and capsid protein VP3 to form heterotrimeric protomers. Five protomers subsequently associate to form pentamers which serve as building blocks for the capsid. Interacts with capsid protein VP2, capsid protein VP3 and capsid protein VP4 following cleavage of capsid protein VP0. Interacts with capsid protein VP1 and capsid protein VP3 in the mature capsid. In terms of assembly, interacts with capsid protein VP0 and capsid protein VP1 to form heterotrimeric protomers. Five protomers subsequently associate to form pentamers which serve as building blocks for the capsid. Interacts with capsid protein VP4 in the mature capsid. Interacts with protein 2C; this interaction may be important for virion morphogenesis. As to quaternary structure, interacts with capsid protein VP1 and capsid protein VP3. Homodimer. In terms of assembly, homohexamer; forms a hexameric ring structure with 6-fold symmetry characteristic of AAA+ ATPases. Interacts (via N-terminus) with host RTN3 (via reticulon domain); this interaction is important for viral replication. Interacts with capsid protein VP3; this interaction may be important for virion morphogenesis. As to quaternary structure, interacts with protein 3CD. Homodimer. Interacts with host GBF1. Interacts (via GOLD domain) with host ACBD3 (via GOLD domain); this interaction allows the formation of a viral protein 3A/ACBD3 heterotetramer with a 2:2 stoichiometry, which will stimulate the recruitment of host PI4KB in order to synthesize PI4P at the viral RNA replication sites. In terms of assembly, interacts with RNA-directed RNA polymerase. As to quaternary structure, interacts with protein 3AB and with RNA-directed RNA polymerase. Interacts with Viral protein genome-linked and with protein 3CD. It depends on Mg(2+) as a cofactor. Specific enzymatic cleavages in vivo by the viral proteases yield processing intermediates and the mature proteins. Post-translationally, myristoylation is required for the formation of pentamers during virus assembly. Further assembly of 12 pentamers and a molecule of genomic RNA generates the provirion. In terms of processing, during virion maturation, immature virions are rendered infectious following cleavage of VP0 into VP4 and VP2. This maturation seems to be an autocatalytic event triggered by the presence of RNA in the capsid and it is followed by a conformational change infectious virion. Myristoylation is required during RNA encapsidation and formation of the mature virus particle. Post-translationally, VPg is uridylylated by the polymerase into VPg-pUpU. This acts as a nucleotide-peptide primer for the genomic RNA replication.

It localises to the virion. The protein resides in the host cytoplasm. It is found in the host cytoplasmic vesicle membrane. The protein localises to the host nucleus. It carries out the reaction a ribonucleoside 5'-triphosphate + H2O = a ribonucleoside 5'-diphosphate + phosphate + H(+). The enzyme catalyses Selective cleavage of Tyr-|-Gly bond in the picornavirus polyprotein.. The catalysed reaction is RNA(n) + a ribonucleoside 5'-triphosphate = RNA(n+1) + diphosphate. It catalyses the reaction Selective cleavage of Gln-|-Gly bond in the poliovirus polyprotein. In other picornavirus reactions Glu may be substituted for Gln, and Ser or Thr for Gly.. With respect to regulation, replication or transcription is subject to high level of random mutations by the nucleotide analog ribavirin. Functionally, forms an icosahedral capsid of pseudo T=3 symmetry with capsid proteins VP2 and VP3. The capsid is 300 Angstroms in diameter, composed of 60 copies of each capsid protein and enclosing the viral positive strand RNA genome. Capsid protein VP1 mainly forms the vertices of the capsid. Capsid protein VP1 interacts with host cell receptor to provide virion attachment to target host cells. This attachment induces virion internalization. Tyrosine kinases are probably involved in the entry process. After binding to its receptor, the capsid undergoes conformational changes. Capsid protein VP1 N-terminus (that contains an amphipathic alpha-helix) and capsid protein VP4 are externalized. Together, they shape a pore in the host membrane through which viral genome is translocated to host cell cytoplasm. In terms of biological role, forms an icosahedral capsid of pseudo T=3 symmetry with capsid proteins VP2 and VP3. The capsid is 300 Angstroms in diameter, composed of 60 copies of each capsid protein and enclosing the viral positive strand RNA genome. Lies on the inner surface of the capsid shell. After binding to the host receptor, the capsid undergoes conformational changes. Capsid protein VP4 is released, Capsid protein VP1 N-terminus is externalized, and together, they shape a pore in the host membrane through which the viral genome is translocated into the host cell cytoplasm. Its function is as follows. Component of immature procapsids, which is cleaved into capsid proteins VP4 and VP2 after maturation. Allows the capsid to remain inactive before the maturation step. Functionally, cysteine protease that cleaves viral polyprotein and specific host proteins. It is responsible for the autocatalytic cleavage between the P1 and P2 regions, which is the first cleavage occurring in the polyprotein. Also cleaves the host translation initiation factor EIF4G1, in order to shut down the capped cellular mRNA translation. Inhibits the host nucleus-cytoplasm protein and RNA trafficking by cleaving host members of the nuclear pores. Counteracts stress granule formation probably by antagonizing its assembly or promoting its dissassembly. In terms of biological role, plays an essential role in the virus replication cycle by acting as a viroporin. Creates a pore in the host endoplasmic reticulum and as a consequence releases Ca2+ in the cytoplasm of infected cell. In turn, high levels of cytoplasmic calcium may trigger membrane trafficking and transport of viral ER-associated proteins to viroplasms, sites of viral genome replication. Induces and associates with structural rearrangements of intracellular membranes. Displays RNA-binding, nucleotide binding and NTPase activities. May play a role in virion morphogenesis and viral RNA encapsidation by interacting with the capsid protein VP3. Its function is as follows. Localizes the viral replication complex to the surface of membranous vesicles. Together with protein 3CD binds the Cis-Active RNA Element (CRE) which is involved in RNA synthesis initiation. Acts as a cofactor to stimulate the activity of 3D polymerase, maybe through a nucleid acid chaperone activity. Functionally, localizes the viral replication complex to the surface of membranous vesicles. It inhibits host cell endoplasmic reticulum-to-Golgi apparatus transport and causes the disassembly of the Golgi complex, possibly through GBF1 interaction. This would result in depletion of MHC, trail receptors and IFN receptors at the host cell surface. Plays an essential role in viral RNA replication by recruiting ACBD3 and PI4KB at the viral replication sites, thereby allowing the formation of the rearranged membranous structures where viral replication takes place. In terms of biological role, acts as a primer for viral RNA replication and remains covalently bound to viral genomic RNA. VPg is uridylylated prior to priming replication into VPg-pUpU. The oriI viral genomic sequence may act as a template for this. The VPg-pUpU is then used as primer on the genomic RNA poly(A) by the RNA-dependent RNA polymerase to replicate the viral genome. During genome replication, the VPg-RNA linkage is removed by the host TDP2, thereby accelerating replication. During the late stage of the replication cycle, host TDP2 is excluded from sites of viral RNA synthesis and encapsidation, allowing for the generation of progeny virions. Involved in the viral replication complex and viral polypeptide maturation. It exhibits protease activity with a specificity and catalytic efficiency that is different from protease 3C. Protein 3CD lacks polymerase activity. Protein 3CD binds to the 5'UTR of the viral genome. Its function is as follows. Replicates the viral genomic RNA on the surface of intracellular membranes. May form linear arrays of subunits that propagate along a strong head-to-tail interaction called interface-I. Covalently attaches UMP to a tyrosine of VPg, which is used to prime RNA synthesis. The positive stranded RNA genome is first replicated at virus induced membranous vesicles, creating a dsRNA genomic replication form. This dsRNA is then used as template to synthesize positive stranded RNA genomes. ss(+)RNA genomes are either translated, replicated or encapsidated. Functionally, major viral protease that mediates proteolytic processing of the polyprotein. Cleaves host EIF5B, contributing to host translation shutoff. Also cleaves host PABPC1, contributing to host translation shutoff. Cleaves host NLRP1, triggers host N-glycine-mediated degradation of the autoinhibitory NLRP1 N-terminal fragment. The protein is Genome polyprotein of Sus scrofa (Pig).